The chain runs to 348 residues: D-alanine--D-alanine ligase (348 aa).

The ATP-grasp domain occupies 132-334 (KRVLESAGIP…YAELIEELVR (203 aa)). Residue 162–217 (EAALSYPVFVKPANMGSSVGISKAESEEELRAAILLALTYDSRILIEQGVLAREIE) participates in ATP binding. Mg(2+) contacts are provided by aspartate 288, glutamate 301, and asparagine 303.

The protein belongs to the D-alanine--D-alanine ligase family. Mg(2+) is required as a cofactor. Mn(2+) serves as cofactor.

It is found in the cytoplasm. It catalyses the reaction 2 D-alanine + ATP = D-alanyl-D-alanine + ADP + phosphate + H(+). Its pathway is cell wall biogenesis; peptidoglycan biosynthesis. Cell wall formation. In Streptococcus equi subsp. zooepidemicus (strain H70), this protein is D-alanine--D-alanine ligase.